Reading from the N-terminus, the 32-residue chain is Delta-actitoxin-Eqd1a (32 aa).

This sequence belongs to the sea anemone short toxin (type III) family. In terms of processing, contains 4 disulfide bonds.

It is found in the secreted. It localises to the nematocyst. Functionally, binds specifically to sodium channels (Nav) of the axonal membrane of crayfish and prolongs the falling phase of the action potential. It also increases the maximum rates of rise of both action potential and resting potential. Is only active on crustaceans. The sequence is that of Delta-actitoxin-Eqd1a from Entacmaea quadricolor (Bubble-tip anemone).